Here is a 131-residue protein sequence, read N- to C-terminus: Peptidyl-prolyl cis-trans isomerase NIMA-interacting 4 (131 aa).

The segment at 1 to 25 is necessary for nuclear localization and DNA-binding; it reads MPPKGKSGSGKGGKGGAASGSDSAD. The interval 1-39 is disordered; sequence MPPKGKSGSGKGGKGGAASGSDSADKKSQGPKGGGNAVK. The necessary for association with the pre-rRNP complexes stretch occupies residues 1–41; the sequence is MPPKGKSGSGKGGKGGAASGSDSADKKSQGPKGGGNAVKVR. The segment covering 7 to 18 has biased composition (gly residues); that stretch reads SGSGKGGKGGAA. Phosphoserine; by CK2 is present on Ser-19. The PpiC domain maps to 35–129; it reads GNAVKVRHIL…FGYHIIMVEG (95 aa).

This sequence belongs to the PpiC/parvulin rotamase family. PIN4 subfamily. In terms of assembly, found in pre-ribosomal ribonucleoprotein (pre-rRNP) complexes. Post-translationally, phosphorylated. Phosphorylation occurs both in the nucleus and the cytoplasm. Phosphorylation at Ser-19 does not affect its PPIase activity but is required for nuclear localization, and the dephosphorylation is a prerequisite for the binding to DNA. The unphosphorylated form associates with the pre-rRNP complexes in the nucleus.

It is found in the nucleus. Its subcellular location is the nucleolus. It localises to the cytoplasm. The protein resides in the cytoskeleton. The protein localises to the spindle. The catalysed reaction is [protein]-peptidylproline (omega=180) = [protein]-peptidylproline (omega=0). Its function is as follows. Involved as a ribosomal RNA processing factor in ribosome biogenesis. Binds to tightly bent AT-rich stretches of double-stranded DNA. In Mus musculus (Mouse), this protein is Peptidyl-prolyl cis-trans isomerase NIMA-interacting 4 (Pin4).